The following is a 289-amino-acid chain: Bifunctional aminodeoxychorismate lyase / D-amino acid transaminase (289 aa).

Pyridoxal 5'-phosphate is bound at residue Arg-50. Position 149 is an N6-(pyridoxal phosphate)lysine (Lys-149). Residues Tyr-153, Thr-216, and Thr-217 each coordinate pyridoxal 5'-phosphate. Ser-252 serves as a coordination point for 2-oxoglutarate. Pyridoxal 5'-phosphate is bound at residue Ser-253. The 2-oxoglutarate site is built by Met-254 and Thr-255.

This sequence belongs to the class-IV pyridoxal-phosphate-dependent aminotransferase family. Homodimer. The cofactor is pyridoxal 5'-phosphate.

It catalyses the reaction 4-amino-4-deoxychorismate = 4-aminobenzoate + pyruvate + H(+). It carries out the reaction D-alanine + 2-oxoglutarate = D-glutamate + pyruvate. It participates in cofactor biosynthesis; tetrahydrofolate biosynthesis; 4-aminobenzoate from chorismate: step 2/2. The protein operates within cell wall biogenesis; peptidoglycan biosynthesis. Bifunctional enzyme that catalyzes two enzymatic reactions in biochemically unrelated pathways: acts as an aminodeoxychorismate (ADC) lyase (ADCL) in folate biosynthesis, converting 4-amino-4-deoxychorismate (ADC) to 4-aminobenzoate (PABA), and as a D-amino acid transaminase (DAAT) in peptidoglycan (PG) biosynthesis. DAAT activity is strictly restricted to D-alanine and D-glutamate. May function as a metabolic toggle that alternates between ADCL and DAAT activity, prioritizing the former over the latter in response to substrate accumulation. Bifunctionality of this enzyme provides a failsafe mechanism for a metabolic coupling between nucleic acid and cell wall biosynthesis that appears to ensure prioritization of PABA production over D-alanine/D-glutamate biosynthesis. The polypeptide is Bifunctional aminodeoxychorismate lyase / D-amino acid transaminase (Mycobacterium tuberculosis (strain ATCC 25618 / H37Rv)).